The primary structure comprises 145 residues: D-aminoacyl-tRNA deacylase (145 aa).

Residues 137–138 (GP) carry the Gly-cisPro motif, important for rejection of L-amino acids motif.

Belongs to the DTD family. Homodimer.

The protein localises to the cytoplasm. The catalysed reaction is glycyl-tRNA(Ala) + H2O = tRNA(Ala) + glycine + H(+). It carries out the reaction a D-aminoacyl-tRNA + H2O = a tRNA + a D-alpha-amino acid + H(+). An aminoacyl-tRNA editing enzyme that deacylates mischarged D-aminoacyl-tRNAs. Also deacylates mischarged glycyl-tRNA(Ala), protecting cells against glycine mischarging by AlaRS. Acts via tRNA-based rather than protein-based catalysis; rejects L-amino acids rather than detecting D-amino acids in the active site. By recycling D-aminoacyl-tRNA to D-amino acids and free tRNA molecules, this enzyme counteracts the toxicity associated with the formation of D-aminoacyl-tRNA entities in vivo and helps enforce protein L-homochirality. The polypeptide is D-aminoacyl-tRNA deacylase (Limosilactobacillus reuteri (strain DSM 20016) (Lactobacillus reuteri)).